Here is a 293-residue protein sequence, read N- to C-terminus: Large ribosomal RNA subunit accumulation protein YCED homolog 1, chloroplastic (293 aa).

The N-terminal 42 residues, Met1–Ser42, are a transit peptide targeting the chloroplast.

Belongs to the DUF177 domain family. Highly expressed in shoots and leaves. Detected in roots, embryos and endosperm.

It is found in the plastid. The protein localises to the chloroplast. Functionally, plays a role in synthesis, processing and/or stability of 23S rRNA. Required for embryogenesis. May be involved in RPL23 transcript levels regulation in non-photosynthetic plastids. The chain is Large ribosomal RNA subunit accumulation protein YCED homolog 1, chloroplastic from Zea mays (Maize).